We begin with the raw amino-acid sequence, 203 residues long: EF-hand calcium-binding domain-containing protein 8 (203 aa).

The tract at residues 61-107 is disordered; that stretch reads SSEKPGESPKPQKMAQPGGSQKKETSRSVPVTDPTSHNSEINQRDQQ. Over residues 87 to 107 the composition is skewed to polar residues; sequence RSVPVTDPTSHNSEINQRDQQ. 2 consecutive EF-hand domains span residues 111–145 and 146–181; these read MHLA…VLSS and MSEE…EFQG.

The polypeptide is EF-hand calcium-binding domain-containing protein 8 (Efcab8) (Mus musculus (Mouse)).